Reading from the N-terminus, the 626-residue chain is DNA mismatch repair protein MutL (626 aa).

The segment at 352-399 (QPPSPSFTSRPSSAGYASGSWHPAVSSPRTEWSPQTAHPAHRPLDLGA) is disordered. The span at 378 to 387 (SPRTEWSPQT) shows a compositional bias: polar residues.

Belongs to the DNA mismatch repair MutL/HexB family.

This protein is involved in the repair of mismatches in DNA. It is required for dam-dependent methyl-directed DNA mismatch repair. May act as a 'molecular matchmaker', a protein that promotes the formation of a stable complex between two or more DNA-binding proteins in an ATP-dependent manner without itself being part of a final effector complex. This chain is DNA mismatch repair protein MutL, found in Brucella anthropi (strain ATCC 49188 / DSM 6882 / CCUG 24695 / JCM 21032 / LMG 3331 / NBRC 15819 / NCTC 12168 / Alc 37) (Ochrobactrum anthropi).